Consider the following 208-residue polypeptide: Small ribosomal subunit protein uS4 (208 aa).

One can recognise an S4 RNA-binding domain in the interval 98–161; that stretch reads RRLDNTIYRL…RQSPIILEAQ (64 aa).

This sequence belongs to the universal ribosomal protein uS4 family. Part of the 30S ribosomal subunit. Contacts protein S5. The interaction surface between S4 and S5 is involved in control of translational fidelity.

Its function is as follows. One of the primary rRNA binding proteins, it binds directly to 16S rRNA where it nucleates assembly of the body of the 30S subunit. In terms of biological role, with S5 and S12 plays an important role in translational accuracy. This chain is Small ribosomal subunit protein uS4, found in Solidesulfovibrio magneticus (strain ATCC 700980 / DSM 13731 / RS-1) (Desulfovibrio magneticus).